Reading from the N-terminus, the 420-residue chain is ATP phosphoribosyltransferase regulatory subunit (420 aa).

It belongs to the class-II aminoacyl-tRNA synthetase family. HisZ subfamily. Heteromultimer composed of HisG and HisZ subunits.

The protein resides in the cytoplasm. It participates in amino-acid biosynthesis; L-histidine biosynthesis; L-histidine from 5-phospho-alpha-D-ribose 1-diphosphate: step 1/9. Its function is as follows. Required for the first step of histidine biosynthesis. May allow the feedback regulation of ATP phosphoribosyltransferase activity by histidine. The protein is ATP phosphoribosyltransferase regulatory subunit of Bacillus cereus (strain AH187).